Here is a 374-residue protein sequence, read N- to C-terminus: Biotin synthase (374 aa).

The Radical SAM core domain occupies 49 to 276; that stretch reads NEVQVSTLLS…KSHVRLSAGR (228 aa). The [4Fe-4S] cluster site is built by Cys-64, Cys-68, and Cys-71. Residues Cys-108, Cys-139, Cys-199, and Arg-271 each contribute to the [2Fe-2S] cluster site. The segment at 344-374 is disordered; the sequence is QQQEQAEGSNDLFIDATKPKVAAKQQHATEA.

It belongs to the radical SAM superfamily. Biotin synthase family. Homodimer. Requires [4Fe-4S] cluster as cofactor. The cofactor is [2Fe-2S] cluster.

It carries out the reaction (4R,5S)-dethiobiotin + (sulfur carrier)-SH + 2 reduced [2Fe-2S]-[ferredoxin] + 2 S-adenosyl-L-methionine = (sulfur carrier)-H + biotin + 2 5'-deoxyadenosine + 2 L-methionine + 2 oxidized [2Fe-2S]-[ferredoxin]. Its pathway is cofactor biosynthesis; biotin biosynthesis; biotin from 7,8-diaminononanoate: step 2/2. Its function is as follows. Catalyzes the conversion of dethiobiotin (DTB) to biotin by the insertion of a sulfur atom into dethiobiotin via a radical-based mechanism. This chain is Biotin synthase, found in Alteromonas mediterranea (strain DSM 17117 / CIP 110805 / LMG 28347 / Deep ecotype).